The sequence spans 132 residues: Outer membrane protein assembly factor BamE (132 aa).

An N-terminal signal peptide occupies residues 1-16; that stretch reads MQKLVLTLLVTSLLAG. Residue C17 is the site of N-palmitoyl cysteine attachment. C17 carries S-diacylglycerol cysteine lipidation.

This sequence belongs to the BamE family. As to quaternary structure, part of the Bam complex.

Its subcellular location is the cell outer membrane. Functionally, part of the outer membrane protein assembly complex, which is involved in assembly and insertion of beta-barrel proteins into the outer membrane. The protein is Outer membrane protein assembly factor BamE of Acinetobacter pittii (strain PHEA-2).